We begin with the raw amino-acid sequence, 339 residues long: Anthranilate phosphoribosyltransferase (339 aa).

5-phospho-alpha-D-ribose 1-diphosphate contacts are provided by residues Gly81, 84-85, Ser89, 91-94, 109-117, and Ala121; these read GD, NVST, and KHGNRALSS. Residue Gly81 participates in anthranilate binding. Ser93 serves as a coordination point for Mg(2+). Asn112 contributes to the anthranilate binding site. Position 167 (Arg167) interacts with anthranilate. Mg(2+) is bound by residues Asp226 and Glu227.

The protein belongs to the anthranilate phosphoribosyltransferase family. Homodimer. Mg(2+) serves as cofactor.

It carries out the reaction N-(5-phospho-beta-D-ribosyl)anthranilate + diphosphate = 5-phospho-alpha-D-ribose 1-diphosphate + anthranilate. It participates in amino-acid biosynthesis; L-tryptophan biosynthesis; L-tryptophan from chorismate: step 2/5. Functionally, catalyzes the transfer of the phosphoribosyl group of 5-phosphorylribose-1-pyrophosphate (PRPP) to anthranilate to yield N-(5'-phosphoribosyl)-anthranilate (PRA). The sequence is that of Anthranilate phosphoribosyltransferase from Rhodopseudomonas palustris (strain BisB18).